Reading from the N-terminus, the 340-residue chain is Chitinase 2 (340 aa).

An N-terminal signal peptide occupies residues 1-32 (MSTPRAAASLAKKAALVALAVLAAALATAARA). The Chitin-binding type-1 domain occupies 33–73 (EQCGAQAGGARCPNCLCCSRWGWCGTTSDFCGDGCQSQCSG). Disulfide bonds link C35–C50, C44–C56, C47–C74, C49–C63, C67–C71, C110–C172, C184–C192, and C291–C323. E154 functions as the Proton donor in the catalytic mechanism.

This sequence belongs to the glycosyl hydrolase 19 family. Chitinase class I subfamily. In terms of tissue distribution, expressed in roots, sheaths and meristems.

The enzyme catalyses Random endo-hydrolysis of N-acetyl-beta-D-glucosaminide (1-&gt;4)-beta-linkages in chitin and chitodextrins.. Its function is as follows. Hydrolyzes chitin and plays a role in defense against fungal pathogens containing chitin. Its overexpression confers enhanced resistance to sheath blight pathogen (R.solani). The polypeptide is Chitinase 2 (Cht2) (Oryza sativa subsp. japonica (Rice)).